The following is a 281-amino-acid chain: Release factor glutamine methyltransferase (281 aa).

S-adenosyl-L-methionine contacts are provided by residues Gly121–Gly125, Asp144, and Asn188. Position 188–191 (Asn188–Tyr191) interacts with substrate.

This sequence belongs to the protein N5-glutamine methyltransferase family. PrmC subfamily.

The catalysed reaction is L-glutaminyl-[peptide chain release factor] + S-adenosyl-L-methionine = N(5)-methyl-L-glutaminyl-[peptide chain release factor] + S-adenosyl-L-homocysteine + H(+). Methylates the class 1 translation termination release factors RF1/PrfA and RF2/PrfB on the glutamine residue of the universally conserved GGQ motif. In Aquifex aeolicus (strain VF5), this protein is Release factor glutamine methyltransferase.